The chain runs to 111 residues: Probable 4-amino-4-deoxy-L-arabinose-phosphoundecaprenol flippase subunit ArnE (111 aa).

At 1–35 (MIWLTLVFASLLSVAGQLCQKQATCFVAISKRRKH) the chain is on the cytoplasmic side. The chain crosses the membrane as a helical span at residues 36-56 (IVLWLGLALACLGLAMVLWLL). One can recognise an EamA domain in the interval 40–109 (LGLALACLGL…IIGGIVILGS (70 aa)). Topologically, residues 57 to 60 (VLQN) are periplasmic. A helical transmembrane segment spans residues 61-81 (VPVGIAYPMLSLNFVWVTLAA). The Cytoplasmic portion of the chain corresponds to 82-87 (VKLWHE). Residues 88–108 (PVSPRHWCGVAFIIGGIVILG) form a helical membrane-spanning segment. Topologically, residues 109-111 (STV) are periplasmic.

The protein belongs to the ArnE family. As to quaternary structure, heterodimer of ArnE and ArnF.

Its subcellular location is the cell inner membrane. It participates in bacterial outer membrane biogenesis; lipopolysaccharide biosynthesis. Its function is as follows. Translocates 4-amino-4-deoxy-L-arabinose-phosphoundecaprenol (alpha-L-Ara4N-phosphoundecaprenol) from the cytoplasmic to the periplasmic side of the inner membrane. This chain is Probable 4-amino-4-deoxy-L-arabinose-phosphoundecaprenol flippase subunit ArnE, found in Escherichia coli O157:H7.